A 626-amino-acid chain; its full sequence is Chaperone protein HtpG (626 aa).

The tract at residues methionine 1 to arginine 341 is a; substrate-binding. The tract at residues glutamate 342–lysine 552 is b. The tract at residues isoleucine 553–serine 626 is c.

The protein belongs to the heat shock protein 90 family. Homodimer.

Its subcellular location is the cytoplasm. Molecular chaperone. Has ATPase activity. The sequence is that of Chaperone protein HtpG from Alkaliphilus metalliredigens (strain QYMF).